The primary structure comprises 444 residues: Type II NADH:quinone oxidoreductase (444 aa).

FAD contacts are provided by residues 8-12 (GGGAG), N38, and S120. Residues 186–191 (VGGGAT) and G285 each bind NAD(+). FAD is bound by residues D325 and A341.

Belongs to the NADH dehydrogenase family. Requires FAD as cofactor.

Its subcellular location is the cell inner membrane. The enzyme catalyses a quinone + NADH + H(+) = a quinol + NAD(+). The catalysed reaction is a ubiquinone + NADH + H(+) = a ubiquinol + NAD(+). Alternative, nonproton pumping NADH:quinone oxidoreductase that delivers electrons to the respiratory chain by oxidation of NADH and reduction of quinones. Utilizes NADH exclusively, and electron flow from NADH to ubiquinone does not generate an electrochemical gradient. In Haemophilus influenzae (strain ATCC 51907 / DSM 11121 / KW20 / Rd), this protein is Type II NADH:quinone oxidoreductase (ndh).